We begin with the raw amino-acid sequence, 212 residues long: Eukaryotic translation initiation factor 4E-4 (212 aa).

Cys143 and Cys147 are joined by a disulfide.

Belongs to the eukaryotic initiation factor 4E family. As to quaternary structure, eIF4F is a multi-subunit complex, the composition of which varies with external and internal environmental conditions. It is composed of at least eIF4A, eIF4E and eIF4G. eIF4E is also known to interact with other partners. As to expression, enriched in somatic cells.

In terms of biological role, recognizes and binds the 7-methylguanosine-containing mRNA cap during an early step in the initiation of protein synthesis and facilitates ribosome binding by inducing the unwinding of the mRNAs secondary structures. All 5 eIF4E proteins bind monomethyl cap structures. Only ife-1, ife-2 and ife-5 bind trimethyl cap structures which result from trans-splicing. Translation of trimethyl cap structure mRNAs may be regulated by intracellular redox state; disulfide bonds change the width and depth of the cap-binding cavity determining selectivity to mRNA caps. The sequence is that of Eukaryotic translation initiation factor 4E-4 (ife-4) from Caenorhabditis elegans.